Reading from the N-terminus, the 103-residue chain is Non-histone chromosomal protein HMG-14B (103 aa).

A disordered region spans residues 1 to 103; sequence MPKRKVAASR…AVEKEEVKSE (103 aa). Positions 29-50 are enriched in basic and acidic residues; that stretch reads VPDKAEPKAKALAAKDKSENKK. Residues 51–60 show a composition bias toward basic residues; it reads AQSKGKKGPK. A compositionally biased stretch (basic and acidic residues) spans 94-103; sequence AVEKEEVKSE.

The protein belongs to the HMGN family.

The protein localises to the nucleus. In terms of biological role, binds to the inner side of the nucleosomal DNA thus altering the interaction between the DNA and the histone octamer. May be involved in the process which maintains transcribable genes in a unique chromatin conformation. This chain is Non-histone chromosomal protein HMG-14B (HMG14), found in Gallus gallus (Chicken).